The following is a 120-amino-acid chain: ATP-dependent Clp protease adapter protein ClpS (120 aa).

The protein belongs to the ClpS family. In terms of assembly, binds to the N-terminal domain of the chaperone ClpA.

In terms of biological role, involved in the modulation of the specificity of the ClpAP-mediated ATP-dependent protein degradation. This Pseudomonas syringae pv. tomato (strain ATCC BAA-871 / DC3000) protein is ATP-dependent Clp protease adapter protein ClpS.